The following is a 212-amino-acid chain: dTTP/UTP pyrophosphatase (212 aa).

Asp-88 functions as the Proton acceptor in the catalytic mechanism.

The protein belongs to the Maf family. YhdE subfamily. The cofactor is a divalent metal cation.

It is found in the cytoplasm. The enzyme catalyses dTTP + H2O = dTMP + diphosphate + H(+). It carries out the reaction UTP + H2O = UMP + diphosphate + H(+). Functionally, nucleoside triphosphate pyrophosphatase that hydrolyzes dTTP and UTP. May have a dual role in cell division arrest and in preventing the incorporation of modified nucleotides into cellular nucleic acids. The protein is dTTP/UTP pyrophosphatase of Colwellia psychrerythraea (strain 34H / ATCC BAA-681) (Vibrio psychroerythus).